The chain runs to 355 residues: Protein RecA (355 aa).

ATP is bound at residue 72 to 79 (GPESSGKT).

The protein belongs to the RecA family.

It localises to the cytoplasm. Can catalyze the hydrolysis of ATP in the presence of single-stranded DNA, the ATP-dependent uptake of single-stranded DNA by duplex DNA, and the ATP-dependent hybridization of homologous single-stranded DNAs. It interacts with LexA causing its activation and leading to its autocatalytic cleavage. In Wolbachia pipientis subsp. Culex pipiens (strain wPip), this protein is Protein RecA.